The following is a 287-amino-acid chain: MNPDNIRELRDRTGLGLSDCKKALEECSGDIKEAIGKLRAIGLAKADKKIDRVASDGLIAMHLAESCGVLIELNCETDFVARNEKFIELISNLASIAYQERCTSIDKLKNAKYEGVGTVQEAIMNGTSVLGEKLELSRLCYLEAKDGVIAGYVHGDVRGLGKTGALVALRSSGDKSKLQEVGKQIAMHVVAMKPEALSIDNLDQTKMNNERSIIEEQVKGLNKSEEVTKKIVDGRMAKYYEEVILLEQKFIKDDKMKISDFMRLSESSVNSPVELSDYKLLVLGSKN.

Positions 77-80 are involved in Mg(2+) ion dislocation from EF-Tu; it reads TDFV.

This sequence belongs to the EF-Ts family.

The protein resides in the cytoplasm. Associates with the EF-Tu.GDP complex and induces the exchange of GDP to GTP. It remains bound to the aminoacyl-tRNA.EF-Tu.GTP complex up to the GTP hydrolysis stage on the ribosome. This is Elongation factor Ts from Wolbachia sp. subsp. Brugia malayi (strain TRS).